The sequence spans 209 residues: Large ribosomal subunit protein uL4 (209 aa).

The tract at residues 50–89 is disordered; that stretch reads MTKTKGLVSGGGKKPFKQKGTGGARQGSSRSILMPGGGTA.

Belongs to the universal ribosomal protein uL4 family. Part of the 50S ribosomal subunit.

Its function is as follows. One of the primary rRNA binding proteins, this protein initially binds near the 5'-end of the 23S rRNA. It is important during the early stages of 50S assembly. It makes multiple contacts with different domains of the 23S rRNA in the assembled 50S subunit and ribosome. Functionally, forms part of the polypeptide exit tunnel. The polypeptide is Large ribosomal subunit protein uL4 (Bdellovibrio bacteriovorus (strain ATCC 15356 / DSM 50701 / NCIMB 9529 / HD100)).